The following is a 185-amino-acid chain: Ribosome-recycling factor (185 aa).

Residues 135 to 159 (ANDKLKASEKNKEASEDEVKRAQEK) are disordered.

Belongs to the RRF family.

It is found in the cytoplasm. Functionally, responsible for the release of ribosomes from messenger RNA at the termination of protein biosynthesis. May increase the efficiency of translation by recycling ribosomes from one round of translation to another. The sequence is that of Ribosome-recycling factor from Moorella thermoacetica (strain ATCC 39073 / JCM 9320).